The primary structure comprises 188 residues: Elongation factor P-like protein (188 aa).

The protein belongs to the elongation factor P family.

This chain is Elongation factor P-like protein, found in Xylella fastidiosa (strain M12).